Consider the following 503-residue polypeptide: Opine oxidase subunit A (503 aa).

To T-protein and to dimethylglycine dehydrogenase. In terms of assembly, heterodimer of a subunit A and a subunit B.

It functions in the pathway opine metabolism; octopine degradation. Functionally, oxidative cleavage of octopine into L-arginine and pyruvate. This is Opine oxidase subunit A (ooxA) from Agrobacterium tumefaciens (strain Ach5).